A 238-amino-acid chain; its full sequence is Small ribosomal subunit protein uS2 (238 aa).

It belongs to the universal ribosomal protein uS2 family.

The sequence is that of Small ribosomal subunit protein uS2 from Actinobacillus pleuropneumoniae serotype 5b (strain L20).